The chain runs to 400 residues: Casein kinase I homolog hhp2 (400 aa).

The 267-residue stretch at 12-278 (YRIGRKIGSG…YLRKLFRDLL (267 aa)) folds into the Protein kinase domain. Residues 18 to 26 (IGSGSFGQI) and K41 each bind ATP. Residue D131 is the Proton acceptor of the active site. Positions 330–352 (PNYSSIPLPAERNPKTPQSFSTN) are disordered.

This sequence belongs to the protein kinase superfamily. CK1 Ser/Thr protein kinase family. Casein kinase I subfamily.

The protein localises to the nucleus. It carries out the reaction L-seryl-[protein] + ATP = O-phospho-L-seryl-[protein] + ADP + H(+). The enzyme catalyses L-threonyl-[protein] + ATP = O-phospho-L-threonyl-[protein] + ADP + H(+). Functionally, involved in DNA repair. May regulate the activity of protein(s) involved in double strand break repair caused by gamma rays. This chain is Casein kinase I homolog hhp2 (hhp2), found in Schizosaccharomyces pombe (strain 972 / ATCC 24843) (Fission yeast).